The sequence spans 463 residues: Matrix remodeling-associated protein 8 (463 aa).

Residues 1–19 form the signal peptide; that stretch reads MELRAWVLLWRLVLLQSSA. Topologically, residues 20–362 are extracellular; it reads VLLSSGPSGP…PEGRAHFFQQ (343 aa). 2 consecutive Ig-like V-type domains span residues 29-173 and 176-308; these read PATS…LEVT and PRAA…LRVT. Intrachain disulfides connect cysteine 54-cysteine 153 and cysteine 202-cysteine 288. Asparagine 135 is a glycosylation site (N-linked (GlcNAc...) asparagine). Serine 244 is subject to Phosphoserine. An RGD motif is present at residues 268–270; it reads RGD. Positions 309–341 are disordered; that stretch reads EPAARPPPPPRDSPGNGSSHSGAPGPGARDPTL. Over residues 321-335 the composition is skewed to low complexity; the sequence is SPGNGSSHSGAPGPG. N-linked (GlcNAc...) asparagine glycosylation is present at asparagine 324. The chain crosses the membrane as a helical span at residues 363 to 383; that stretch reads LGYVLATLLLFILLLITVVLA. Topologically, residues 384–463 are cytoplasmic; the sequence is TRQRRRGGYE…DKEFRKEYCK (80 aa).

As to quaternary structure, homodimer in cis. Does not appear to form trans-homodimers. Interacts with ITGB3; the interaction inhibits ITGAV:ITGB3 heterodimer formation.

The protein resides in the cell membrane. The protein localises to the cell junction. Its subcellular location is the tight junction. It localises to the cytoplasm. It is found in the cell projection. The protein resides in the cilium membrane. The protein localises to the nucleus. Transmembrane protein which can modulate activity of various signaling pathways, probably via binding to integrin ITGAV:ITGB3. Mediates heterophilic cell-cell interactions in vitro. Inhibits osteoclastogenesis downstream of TNFSF11/RANKL and CSF1, where it may function by attenuating signaling via integrin ITGB3 and MAP kinase p38. Plays a role in cartilage formation where it promotes proliferation and maturation of growth plate chondrocytes. Stimulates formation of primary cilia in chondrocytes. Enhances expression of genes involved in the hedgehog signaling pathway in chondrocytes, including the hedgehog signaling molecule IHH; may also promote signaling via the PTHLH/PTHrP pathway. Plays a role in angiogenesis where it suppresses migration of endothelial cells and also promotes their apoptosis. Inhibits VEGF-induced activation of AKT and p38 MAP kinase in endothelial cells. Also inhibits VTN (vitronectin)-mediated integrin ITGAV:ITGB3 signaling and activation of PTK2/FAK. May play a role in the maturation and maintenance of the blood-brain barrier. The sequence is that of Matrix remodeling-associated protein 8 (MXRA8) from Bos taurus (Bovine).